The sequence spans 372 residues: 2,7-anhydro-N-acetylneuraminate hydratase (372 aa).

The NAD(+) site is built by tyrosine 11, phenylalanine 12, aspartate 33, asparagine 36, threonine 68, asparagine 70, histidine 73, glutamate 90, lysine 91, and tryptophan 160.

This sequence belongs to the Gfo/Idh/MocA family. In terms of assembly, homodimer. NAD(+) is required as a cofactor.

It carries out the reaction N-acetyl-2,7-anhydro-alpha-neuraminate + H2O = N-acetyl-alpha-neuraminate. The catalysed reaction is 2-deoxy-2,3-dehydro-N-acetylneuraminate + H2O = N-acetyl-alpha-neuraminate. Its activity is regulated as follows. All conversions require NAD(+) as a cofactor, which is regenerated in the reaction. The presence of EGTA and several divalent cations does not affect the activity. Its function is as follows. Hydratase involved in the degradation of sialic acids. Catalyzes the reversible conversion of the dehydrated form of N-acetylneuraminate (Neu5Ac), 2,7-anhydro-N-acetylneuraminate (2,7-AN), to Neu5Ac. Also catalyzes the irreversible conversion of 2-deoxy-2,3-didehydro-N-acetylneuraminate (2,3-EN) to Neu5Ac. The reaction mechanism involves keto intermediates and the transient formation of NADH. This Escherichia coli (strain K12) protein is 2,7-anhydro-N-acetylneuraminate hydratase.